A 264-amino-acid chain; its full sequence is Thymidylate synthase (264 aa).

Arginine 21 is a dUMP binding site. Histidine 51 lines the (6R)-5,10-methylene-5,6,7,8-tetrahydrofolate pocket. 126-127 is a binding site for dUMP; that stretch reads RR. Cysteine 146 functions as the Nucleophile in the catalytic mechanism. Residues 166–169, asparagine 177, and 207–209 contribute to the dUMP site; these read RSAD and HIY. A (6R)-5,10-methylene-5,6,7,8-tetrahydrofolate-binding site is contributed by aspartate 169. Alanine 263 contributes to the (6R)-5,10-methylene-5,6,7,8-tetrahydrofolate binding site.

This sequence belongs to the thymidylate synthase family. Bacterial-type ThyA subfamily. Homodimer.

Its subcellular location is the cytoplasm. The enzyme catalyses dUMP + (6R)-5,10-methylene-5,6,7,8-tetrahydrofolate = 7,8-dihydrofolate + dTMP. Its pathway is pyrimidine metabolism; dTTP biosynthesis. Catalyzes the reductive methylation of 2'-deoxyuridine-5'-monophosphate (dUMP) to 2'-deoxythymidine-5'-monophosphate (dTMP) while utilizing 5,10-methylenetetrahydrofolate (mTHF) as the methyl donor and reductant in the reaction, yielding dihydrofolate (DHF) as a by-product. This enzymatic reaction provides an intracellular de novo source of dTMP, an essential precursor for DNA biosynthesis. This Coxiella burnetii (strain Dugway 5J108-111) protein is Thymidylate synthase.